The sequence spans 488 residues: Multidrug resistance outer membrane protein MdtP (488 aa).

The signal sequence occupies residues 1-23 (MINRQLSRLLLCSILGSTTLISG). C24 is lipidated: N-palmitoyl cysteine. A lipid anchor (S-diacylglycerol cysteine) is attached at C24.

This sequence belongs to the outer membrane factor (OMF) (TC 1.B.17) family. In terms of assembly, could be part of a tripartite efflux system composed of MdtN, MdtO and MdtP.

The protein localises to the cell outer membrane. Could be involved in resistance to puromycin, acriflavine and tetraphenylarsonium chloride. The chain is Multidrug resistance outer membrane protein MdtP (mdtP) from Escherichia coli O157:H7.